Consider the following 427-residue polypeptide: MQLTPLHIQGGRNLSGEIAIQPSKNAALPIIVASLLSSEPVTLHGVPRLSDVYTILELAHHIGTRHVWTGPNSLTLHTPEILNTDAPYALVSKMRASFIMMGALLARAGEATVSMPGGCAFGYRPVDQHVKAFRALGVHIVEEGGNFEARREGSLNGAFVFELLTVGGTQNAILASVLGDGVVTLENASIDTDVVDLINFLNSLGAQIQGGGTNTLTIRGVRALRGGEYRIIPDRIEAGTFMIAAAATRSRLTLTNVRPDHLRAVSSKLMEMGVDILETEGRLIVDARDRELKPVNVTTQSFPGFPTDVQPQMSALLATVPGTSVVQDPVYPDRLTHVAELHRMGANITVSGYTQVIQGGTLHAAPVKAADLRAGAALFIAALTTEGETVIEGVQYLNRGYERLAERLRSIGANAWQPQPVLASAMD.

24 to 25 (KN) contributes to the phosphoenolpyruvate binding site. R95 is a binding site for UDP-N-acetyl-alpha-D-glucosamine. The active-site Proton donor is the C119. C119 is subject to 2-(S-cysteinyl)pyruvic acid O-phosphothioketal. UDP-N-acetyl-alpha-D-glucosamine is bound by residues 124-128 (RPVDQ), D308, and V330.

The protein belongs to the EPSP synthase family. MurA subfamily.

The protein resides in the cytoplasm. The enzyme catalyses phosphoenolpyruvate + UDP-N-acetyl-alpha-D-glucosamine = UDP-N-acetyl-3-O-(1-carboxyvinyl)-alpha-D-glucosamine + phosphate. It participates in cell wall biogenesis; peptidoglycan biosynthesis. Functionally, cell wall formation. Adds enolpyruvyl to UDP-N-acetylglucosamine. The polypeptide is UDP-N-acetylglucosamine 1-carboxyvinyltransferase (Deinococcus geothermalis (strain DSM 11300 / CIP 105573 / AG-3a)).